The following is a 71-amino-acid chain: Large ribosomal subunit protein bL31 (71 aa).

The Zn(2+) site is built by Cys-16, Cys-18, Cys-37, and Cys-40.

It belongs to the bacterial ribosomal protein bL31 family. Type A subfamily. In terms of assembly, part of the 50S ribosomal subunit. It depends on Zn(2+) as a cofactor.

Binds the 23S rRNA. The protein is Large ribosomal subunit protein bL31 of Serratia proteamaculans (strain 568).